The sequence spans 184 residues: Probable RNA 2'-phosphotransferase (184 aa).

This sequence belongs to the KptA/TPT1 family.

Removes the 2'-phosphate from RNA via an intermediate in which the phosphate is ADP-ribosylated by NAD followed by a presumed transesterification to release the RNA and generate ADP-ribose 1''-2''-cyclic phosphate (APPR&gt;P). May function as an ADP-ribosylase. The chain is Probable RNA 2'-phosphotransferase from Shigella boydii serotype 18 (strain CDC 3083-94 / BS512).